Consider the following 95-residue polypeptide: Co-chaperonin GroES (95 aa).

It belongs to the GroES chaperonin family. As to quaternary structure, heptamer of 7 subunits arranged in a ring. Interacts with the chaperonin GroEL.

The protein localises to the cytoplasm. In terms of biological role, together with the chaperonin GroEL, plays an essential role in assisting protein folding. The GroEL-GroES system forms a nano-cage that allows encapsulation of the non-native substrate proteins and provides a physical environment optimized to promote and accelerate protein folding. GroES binds to the apical surface of the GroEL ring, thereby capping the opening of the GroEL channel. In Jannaschia sp. (strain CCS1), this protein is Co-chaperonin GroES.